Consider the following 341-residue polypeptide: THO complex subunit 6 (341 aa).

7 WD repeats span residues 22–61 (RLHM…SSEA), 74–112 (AHDG…GCKE), 124–165 (LEVP…RVLR), 166–205 (GHTD…EVQT), 215–254 (SRPH…PTTI), 256–293 (PIRA…KAQV), and 295–339 (GSSP…AFSL). Ser180 is subject to Phosphoserine.

It belongs to the WD repeat THOC6 family. Component of the THO subcomplex, which is composed of THOC1, THOC2, THOC3, THOC5, THOC6 and THOC7. The THO subcomplex interacts with DDX39B to form the THO-DDX39B complex which multimerizes into a 28-subunit tetrameric assembly. Component of the transcription/export (TREX) complex at least composed of ALYREF/THOC4, DDX39B, SARNP/CIP29, CHTOP and the THO subcomplex; in the complex interacts with THOC5; together with THOC5 and THOC7, plays a key structural role in the oligomerization of the THO-DDX39B complex. TREX seems to have a dynamic structure involving ATP-dependent remodeling.

The protein localises to the nucleus. It localises to the nucleus speckle. In terms of biological role, component of the THO subcomplex of the TREX complex which is thought to couple mRNA transcription, processing and nuclear export, and which specifically associates with spliced mRNA and not with unspliced pre-mRNA. Plays a key structural role in the oligomerization of the THO-DDX39B complex. TREX is recruited to spliced mRNAs by a transcription-independent mechanism, binds to mRNA upstream of the exon-junction complex (EJC) and is recruited in a splicing- and cap-dependent manner to a region near the 5' end of the mRNA where it functions in mRNA export to the cytoplasm via the TAP/NXF1 pathway. Plays a role in apoptosis negative control involved in brain development. (Microbial infection) The TREX complex is essential for the export of Kaposi's sarcoma-associated herpesvirus (KSHV) intronless mRNAs and infectious virus production. The sequence is that of THO complex subunit 6 (THOC6) from Homo sapiens (Human).